The sequence spans 151 residues: Large ribosomal subunit protein uL23m (151 aa).

Residues 120-143 show a composition bias toward basic and acidic residues; that stretch reads DDKKSLEDAKKNHKKFLDKNKDRP. The disordered stretch occupies residues 120–151; that stretch reads DDKKSLEDAKKNHKKFLDKNKDRPGTPGWFSI.

Belongs to the universal ribosomal protein uL23 family. Component of the mitochondrial ribosome large subunit (39S) which comprises a 16S rRNA and about 50 distinct proteins.

The protein localises to the mitochondrion. The protein is Large ribosomal subunit protein uL23m (mRpL23) of Anopheles gambiae (African malaria mosquito).